We begin with the raw amino-acid sequence, 265 residues long: 4-hydroxy-tetrahydrodipicolinate reductase (265 aa).

Residue 9–14 (GPRGRM) participates in NAD(+) binding. Lysine 37 provides a ligand contact to NADP(+). Residues 99–101 (GTT) and 125–128 (APNF) each bind NAD(+). Histidine 155 functions as the Proton donor/acceptor in the catalytic mechanism. Residue histidine 156 coordinates (S)-2,3,4,5-tetrahydrodipicolinate. Residue lysine 159 is the Proton donor of the active site. 165–166 (GT) provides a ligand contact to (S)-2,3,4,5-tetrahydrodipicolinate. The segment covering 178–190 (RESQKQGHPKEEE) has biased composition (basic and acidic residues). Positions 178 to 200 (RESQKQGHPKEEETLPGARGADM) are disordered.

The protein belongs to the DapB family.

The protein resides in the cytoplasm. It carries out the reaction (S)-2,3,4,5-tetrahydrodipicolinate + NAD(+) + H2O = (2S,4S)-4-hydroxy-2,3,4,5-tetrahydrodipicolinate + NADH + H(+). The catalysed reaction is (S)-2,3,4,5-tetrahydrodipicolinate + NADP(+) + H2O = (2S,4S)-4-hydroxy-2,3,4,5-tetrahydrodipicolinate + NADPH + H(+). It functions in the pathway amino-acid biosynthesis; L-lysine biosynthesis via DAP pathway; (S)-tetrahydrodipicolinate from L-aspartate: step 4/4. Functionally, catalyzes the conversion of 4-hydroxy-tetrahydrodipicolinate (HTPA) to tetrahydrodipicolinate. In Oceanobacillus iheyensis (strain DSM 14371 / CIP 107618 / JCM 11309 / KCTC 3954 / HTE831), this protein is 4-hydroxy-tetrahydrodipicolinate reductase.